The following is a 310-amino-acid chain: tRNA dimethylallyltransferase (310 aa).

12-19 contacts ATP; the sequence is GPTATGKT. Position 14-19 (14-19) interacts with substrate; the sequence is TATGKT. Residues 37–40 are interaction with substrate tRNA; sequence DSMM.

This sequence belongs to the IPP transferase family. In terms of assembly, monomer. Mg(2+) serves as cofactor.

It catalyses the reaction adenosine(37) in tRNA + dimethylallyl diphosphate = N(6)-dimethylallyladenosine(37) in tRNA + diphosphate. In terms of biological role, catalyzes the transfer of a dimethylallyl group onto the adenine at position 37 in tRNAs that read codons beginning with uridine, leading to the formation of N6-(dimethylallyl)adenosine (i(6)A). The protein is tRNA dimethylallyltransferase of Desulforudis audaxviator (strain MP104C).